Consider the following 432-residue polypeptide: Enolase (432 aa).

Gln-163 provides a ligand contact to (2R)-2-phosphoglycerate. Residue Glu-205 is the Proton donor of the active site. Residues Asp-242, Glu-288, and Asp-315 each coordinate Mg(2+). (2R)-2-phosphoglycerate is bound by residues Lys-340, Arg-369, Ser-370, and Lys-391. Lys-340 (proton acceptor) is an active-site residue.

It belongs to the enolase family. As to quaternary structure, homodimer. Mg(2+) is required as a cofactor.

The protein localises to the cytoplasm. It is found in the secreted. The protein resides in the cell surface. It carries out the reaction (2R)-2-phosphoglycerate = phosphoenolpyruvate + H2O. It functions in the pathway carbohydrate degradation; glycolysis; pyruvate from D-glyceraldehyde 3-phosphate: step 4/5. The covalent binding to the substrate causes inactivation of the enzyme, and possibly serves as a signal for the export of the protein. Functionally, catalyzes the reversible conversion of 2-phosphoglycerate (2-PG) into phosphoenolpyruvate (PEP). It is essential for the degradation of carbohydrates via glycolysis. This is Enolase from Enterococcus hirae.